The primary structure comprises 119 residues: Holo-[acyl-carrier-protein] synthase (119 aa).

The Mg(2+) site is built by Asp8 and Glu59.

Belongs to the P-Pant transferase superfamily. AcpS family. The cofactor is Mg(2+).

Its subcellular location is the cytoplasm. The enzyme catalyses apo-[ACP] + CoA = holo-[ACP] + adenosine 3',5'-bisphosphate + H(+). Transfers the 4'-phosphopantetheine moiety from coenzyme A to a Ser of acyl-carrier-protein. The protein is Holo-[acyl-carrier-protein] synthase of Staphylococcus aureus (strain JH1).